The sequence spans 247 residues: Adenosylcobinamide-GDP ribazoletransferase (247 aa).

Helical transmembrane passes span 34-54, 57-77, 113-133, 138-158, and 194-214; these read IITF…VFMV, AWCG…LMTG, GGLA…ELAL, ILAS…LLMY, and VLLL…AIFI.

Belongs to the CobS family. Requires Mg(2+) as cofactor.

It is found in the cell inner membrane. The catalysed reaction is alpha-ribazole + adenosylcob(III)inamide-GDP = adenosylcob(III)alamin + GMP + H(+). The enzyme catalyses alpha-ribazole 5'-phosphate + adenosylcob(III)inamide-GDP = adenosylcob(III)alamin 5'-phosphate + GMP + H(+). It functions in the pathway cofactor biosynthesis; adenosylcobalamin biosynthesis; adenosylcobalamin from cob(II)yrinate a,c-diamide: step 7/7. Its function is as follows. Joins adenosylcobinamide-GDP and alpha-ribazole to generate adenosylcobalamin (Ado-cobalamin). Also synthesizes adenosylcobalamin 5'-phosphate from adenosylcobinamide-GDP and alpha-ribazole 5'-phosphate. The sequence is that of Adenosylcobinamide-GDP ribazoletransferase from Shigella flexneri.